A 457-amino-acid polypeptide reads, in one-letter code: Multidrug resistance protein MdtK (457 aa).

A run of 12 helical transmembrane segments spans residues 11–31, 53–73, 93–113, 127–147, 160–180, 188–208, 243–263, 276–296, 314–334, 350–370, 387–407, and 418–438; these read LLALAIPVILAQVAQTAMGFV, IWLPAILFGHGLLLALTPVIA, WLAGFVSVLVMIVLWNAGYII, AVGYLRALLWGAPGYLFFQVA, GMVMGFLGLLVNIPVNYIFIY, LGGIGCGVATAAVYWVMFIAM, LPIALALFFEVTLFAVVALLV, IALNFSSLMFVLPMSLAAAVT, AARTGLGVGICMAVVTAIFTV, VVALAAQLMLLAAVYQISDSI, IFFITFTAYWVLGLPSGYILA, and PAGFWMGFIIGLTSAAVLMML.

Belongs to the multi antimicrobial extrusion (MATE) (TC 2.A.66.1) family. MdtK subfamily.

Its subcellular location is the cell inner membrane. Its function is as follows. Multidrug efflux pump that functions probably as a Na(+)/drug antiporter. This Salmonella newport (strain SL254) protein is Multidrug resistance protein MdtK.